A 326-amino-acid chain; its full sequence is tRNA-modifying protein YgfZ (326 aa).

The folate site is built by tryptophan 27 and tryptophan 189.

It belongs to the tRNA-modifying YgfZ family.

Its subcellular location is the cytoplasm. Functionally, folate-binding protein involved in regulating the level of ATP-DnaA and in the modification of some tRNAs. It is probably a key factor in regulatory networks that act via tRNA modification, such as initiation of chromosomal replication. The polypeptide is tRNA-modifying protein YgfZ (Escherichia fergusonii (strain ATCC 35469 / DSM 13698 / CCUG 18766 / IAM 14443 / JCM 21226 / LMG 7866 / NBRC 102419 / NCTC 12128 / CDC 0568-73)).